The sequence spans 413 residues: PAB1-binding protein 2 (413 aa).

The span at 1 to 23 (MSTETTKPSITTTPTTVLVSPNT) shows a compositional bias: low complexity. A disordered region spans residues 1-36 (MSTETTKPSITTTPTTVLVSPNTLKRKKGEDTSEEQ). 3 consecutive KH domains span residues 66–130 (DVHL…YGMI), 148–213 (EISI…TFYI), and 330–394 (FVQQ…IMLI).

In terms of assembly, interacts with PAB1.

The protein resides in the nucleus. This chain is PAB1-binding protein 2 (PBP2), found in Saccharomyces cerevisiae (strain ATCC 204508 / S288c) (Baker's yeast).